Consider the following 239-residue polypeptide: Probable transcriptional regulatory protein CD630_07950 (239 aa).

It belongs to the TACO1 family.

It is found in the cytoplasm. The chain is Probable transcriptional regulatory protein CD630_07950 from Clostridioides difficile (strain 630) (Peptoclostridium difficile).